We begin with the raw amino-acid sequence, 78 residues long: Large ribosomal subunit protein bL28 (78 aa).

The protein belongs to the bacterial ribosomal protein bL28 family.

This chain is Large ribosomal subunit protein bL28, found in Acaryochloris marina (strain MBIC 11017).